The following is a 359-amino-acid chain: NADH-quinone oxidoreductase subunit H (359 aa).

A run of 8 helical transmembrane segments spans residues 19-39 (IGWF…FIAL), 94-114 (FLFV…FAVL), 127-147 (VGLF…LAAG), 166-186 (IVSY…LAGT), 202-222 (FMHW…IYFI), 266-286 (MFMV…SPLP), 301-321 (VWGA…QMWL), and 337-357 (CWKV…IWVI).

It belongs to the complex I subunit 1 family. As to quaternary structure, NDH-1 is composed of 14 different subunits. Subunits NuoA, H, J, K, L, M, N constitute the membrane sector of the complex.

It localises to the cell inner membrane. The catalysed reaction is a quinone + NADH + 5 H(+)(in) = a quinol + NAD(+) + 4 H(+)(out). Its function is as follows. NDH-1 shuttles electrons from NADH, via FMN and iron-sulfur (Fe-S) centers, to quinones in the respiratory chain. The immediate electron acceptor for the enzyme in this species is believed to be ubiquinone. Couples the redox reaction to proton translocation (for every two electrons transferred, four hydrogen ions are translocated across the cytoplasmic membrane), and thus conserves the redox energy in a proton gradient. This subunit may bind ubiquinone. The sequence is that of NADH-quinone oxidoreductase subunit H from Chlorobaculum parvum (strain DSM 263 / NCIMB 8327) (Chlorobium vibrioforme subsp. thiosulfatophilum).